Reading from the N-terminus, the 161-residue chain is Peptidyl-prolyl cis-trans isomerase-like 3 (161 aa).

S2 is modified (N-acetylserine). A PPIase cyclophilin-type domain is found at 2-154 (SVTLHTDVGD…NDVHIKDITI (153 aa)). R61 is subject to Omega-N-methylarginine.

The protein belongs to the cyclophilin-type PPIase family. PPIL3 subfamily. In terms of assembly, identified in the spliceosome C complex. In terms of tissue distribution, ubiquitous. Detected at low levels.

It carries out the reaction [protein]-peptidylproline (omega=180) = [protein]-peptidylproline (omega=0). Its function is as follows. PPIases accelerate the folding of proteins. It catalyzes the cis-trans isomerization of proline imidic peptide bonds in oligopeptides. May be involved in pre-mRNA splicing. The polypeptide is Peptidyl-prolyl cis-trans isomerase-like 3 (PPIL3) (Homo sapiens (Human)).